A 60-amino-acid polypeptide reads, in one-letter code: Large ribosomal subunit protein bL32B (60 aa).

Residues 1 to 19 are compositionally biased toward basic residues; sequence MAVPKRKMSRANTRHRRSQ. A disordered region spans residues 1–20; that stretch reads MAVPKRKMSRANTRHRRSQW.

Belongs to the bacterial ribosomal protein bL32 family.

This Saccharopolyspora erythraea (strain ATCC 11635 / DSM 40517 / JCM 4748 / NBRC 13426 / NCIMB 8594 / NRRL 2338) protein is Large ribosomal subunit protein bL32B.